The primary structure comprises 86 residues: OMEGA-stichotoxin-Shd4a (86 aa).

Residues 1–23 (MASFRTLFACVVILCCVLWSSMA) form the signal peptide. A propeptide spanning residues 24 to 36 (RYGEDMEVETEMN) is cleaved from the precursor. An EGF-like domain is found at 40 to 82 (EGVRCTGQHASSFCLNGGTCRHIASLGEYYCICPGDYTGHRCD). Cystine bridges form between C44–C59, C53–C70, and C72–C81.

Belongs to the EGF domain peptide family.

The protein resides in the secreted. It is found in the nematocyst. Has both toxic and EGF activity. Its EGF activity consists of rounding cells (morphological change) and inducing tyrosine phosphorylation of the EGFR in A431 cells, but with a lower potency that human EGF. The chain is OMEGA-stichotoxin-Shd4a from Stichodactyla haddoni (Saddle carpet anemone).